A 597-amino-acid chain; its full sequence is Arginine--tRNA ligase (597 aa).

The 'HIGH' region motif lies at 138–148 (ANPTGPMHVGH).

Belongs to the class-I aminoacyl-tRNA synthetase family. Monomer.

It localises to the cytoplasm. The catalysed reaction is tRNA(Arg) + L-arginine + ATP = L-arginyl-tRNA(Arg) + AMP + diphosphate. In Rhodopseudomonas palustris (strain ATCC BAA-98 / CGA009), this protein is Arginine--tRNA ligase.